A 121-amino-acid chain; its full sequence is Perlustrin-like protein (121 aa).

The N-terminal stretch at 1–23 (MKFGVGFLLSCLVALNTVQNMLA) is a signal peptide. An IGFBP N-terminal domain is found at 24-104 (LSCLPCDFDT…FDFKGTCQES (81 aa)). 6 disulfides stabilise this stretch: cysteine 26/cysteine 52, cysteine 29/cysteine 54, cysteine 36/cysteine 55, cysteine 45/cysteine 58, cysteine 66/cysteine 79, and cysteine 73/cysteine 101. 3 N-linked (GlcNAc...) asparagine glycosylation sites follow: asparagine 68, asparagine 81, and asparagine 117.

In terms of tissue distribution, component of the acid-insoluble organic matrix of calcified layers of the shell (at protein level).

The protein localises to the secreted. This is Perlustrin-like protein from Lottia gigantea (Giant owl limpet).